Here is a 556-residue protein sequence, read N- to C-terminus: Threonylcarbamoyladenosine tRNA methylthiotransferase (556 aa).

The segment at Ser17–Pro57 is disordered. Residues Gln60–Lys168 enclose the MTTase N-terminal domain. Residues Cys69, Cys105, Cys134, Cys210, Cys214, and Cys217 each contribute to the [4Fe-4S] cluster site. The Radical SAM core domain occupies Arg196–Asp427. The TRAM domain maps to Asp427–Gln489. The chain crosses the membrane as a helical span at residues Val536 to Val556.

This sequence belongs to the methylthiotransferase family. CDKAL1 subfamily. Requires [4Fe-4S] cluster as cofactor.

The protein resides in the endoplasmic reticulum membrane. The catalysed reaction is N(6)-L-threonylcarbamoyladenosine(37) in tRNA + (sulfur carrier)-SH + AH2 + 2 S-adenosyl-L-methionine = 2-methylsulfanyl-N(6)-L-threonylcarbamoyladenosine(37) in tRNA + (sulfur carrier)-H + 5'-deoxyadenosine + L-methionine + A + S-adenosyl-L-homocysteine + 2 H(+). Its function is as follows. Catalyzes the methylthiolation of N6-threonylcarbamoyladenosine (t(6)A), leading to the formation of 2-methylthio-N6-threonylcarbamoyladenosine (ms(2)t(6)A) at position 37 in tRNAs that read codons beginning with adenine. The protein is Threonylcarbamoyladenosine tRNA methylthiotransferase (cdkal1) of Xenopus laevis (African clawed frog).